A 429-amino-acid chain; its full sequence is Serine--tRNA ligase (429 aa).

236–238 (TGE) is a binding site for L-serine. 267–269 (RSE) contributes to the ATP binding site. Glu-290 contacts L-serine. 354–357 (EISS) provides a ligand contact to ATP. Ser-390 contacts L-serine.

It belongs to the class-II aminoacyl-tRNA synthetase family. Type-1 seryl-tRNA synthetase subfamily. As to quaternary structure, homodimer. The tRNA molecule binds across the dimer.

The protein resides in the cytoplasm. The enzyme catalyses tRNA(Ser) + L-serine + ATP = L-seryl-tRNA(Ser) + AMP + diphosphate + H(+). It carries out the reaction tRNA(Sec) + L-serine + ATP = L-seryl-tRNA(Sec) + AMP + diphosphate + H(+). It functions in the pathway aminoacyl-tRNA biosynthesis; selenocysteinyl-tRNA(Sec) biosynthesis; L-seryl-tRNA(Sec) from L-serine and tRNA(Sec): step 1/1. Its function is as follows. Catalyzes the attachment of serine to tRNA(Ser). Is also able to aminoacylate tRNA(Sec) with serine, to form the misacylated tRNA L-seryl-tRNA(Sec), which will be further converted into selenocysteinyl-tRNA(Sec). This is Serine--tRNA ligase from Vesicomyosocius okutanii subsp. Calyptogena okutanii (strain HA).